Consider the following 354-residue polypeptide: UDP-glucose 4-epimerase GEPI42 (354 aa).

11-42 contacts NAD(+); that stretch reads TILVTGGAGFIGSHTVVQLLKQGFHVSIIDNL. Residue Ser-137 participates in substrate binding. Residue Tyr-161 is the Proton acceptor of the active site.

This sequence belongs to the NAD(P)-dependent epimerase/dehydratase family. It depends on NAD(+) as a cofactor.

The enzyme catalyses UDP-alpha-D-glucose = UDP-alpha-D-galactose. The protein operates within carbohydrate metabolism; galactose metabolism. This chain is UDP-glucose 4-epimerase GEPI42, found in Cyamopsis tetragonoloba (Guar).